A 388-amino-acid chain; its full sequence is bZIP transcription factor ABI5 homolog (388 aa).

Residues 1–36 form a disordered region; the sequence is MASEMSKNVKVTDDQEVTSQERDQSGGTKVGGEEEI. Serine 44 is subject to Phosphoserine. Residues 302 to 365 enclose the bZIP domain; sequence VERRQRRMIK…KQMLVEKMME (64 aa). The interval 304-323 is basic motif; that stretch reads RRQRRMIKNRESAARSRARK. The segment at 330–344 is leucine-zipper; sequence LEAELNYLKQENARL. The interval 368-388 is disordered; it reads KEKMNANRGGSQLRRSGSCMW.

The protein belongs to the bZIP family. ABI5 subfamily. In terms of assembly, forms homodimers. Interacts with VP1. Interacts with GF14D. Interacts with PP2C51. Interacts with SAPK2. Phosphorylated at Ser-44 by SAPK6. As to expression, expressed in roots, leaves and panicles. Expressed in seeds.

Its subcellular location is the nucleus. Its function is as follows. Transcription factor that possesses transactivation activity in yeast. Involved in abscisic acid (ABA) signaling pathway. Binds to the G-box motif 5'-CACGTG-3' of TRAB1 gene promoter. Involved in the regulation of pollen maturation. May act as negative regulator of salt stress response. Together with PYL5, PP2C30 and SAPK2, is part of an ABA signaling unit that modulates seed germination and early seedling growth. This Oryza sativa subsp. japonica (Rice) protein is bZIP transcription factor ABI5 homolog.